A 581-amino-acid chain; its full sequence is MKSHIQSLLEQTIESFKQQGILPADFEARIQVDRTKDKSHGDLATNLAMMLTKVAGKNPRELAQLIIDTLPASAFVAKVEIAGPGFINFFINDSALADQLQNAVNDEHLGIKLPTPQTVVVDYSSPNLAKEMHVGHLRSTIIGDSVVRALEFLGHKVIRQNHVGDWGTQFGMLLAYMEELRAKNGEQAHLELSDLETFYRAAKLRFDESAEFATRARQLVVELQSGDEYCNKLWREFNDISLSHCHEVYARLGVSLTRADVHGESAYNADLEQVVKDLDAQGLLTESNGAKVVFQEAFRNKEGEALPVIIQKADGGYLYATSDLAAMRYRSNVLKADRVLYFVDLRQALHFQQVFSLAKLAKFVREDMSLEHLGFGTMNGEDGRPFKTRSGGVVKLVDLLEEANVRALELVRSKNPDMDEETLAEIARVVGISAVKYADLSKNRTSDYIFSFEQMLSFEGNTAPYLLYAYTRVAGIFKRVTGLDLSQAKIVLEHEKEKDLGNKLAQFGEILNRVVDKGQPHVLCAYLYELAGAFSSFYEACPVLAADNDEQKNSRLLLSQLTARTLQKGLNLLGIETLERM.

The 'HIGH' region signature appears at 126–136; the sequence is PNLAKEMHVGH.

The protein belongs to the class-I aminoacyl-tRNA synthetase family. Monomer.

The protein localises to the cytoplasm. It catalyses the reaction tRNA(Arg) + L-arginine + ATP = L-arginyl-tRNA(Arg) + AMP + diphosphate. The protein is Arginine--tRNA ligase of Shewanella putrefaciens (strain CN-32 / ATCC BAA-453).